A 325-amino-acid polypeptide reads, in one-letter code: Lipoyl synthase (325 aa).

Residues 1–24 are disordered; sequence MPIAPDRVRHPEKANRPDNPIQRK. Residues Cys54, Cys59, Cys65, Cys80, Cys84, Cys87, and Ser293 each contribute to the [4Fe-4S] cluster site. Residues 66-282 enclose the Radical SAM core domain; it reads WKKKHATFMI…VTVGRGKGFL (217 aa).

The protein belongs to the radical SAM superfamily. Lipoyl synthase family. Requires [4Fe-4S] cluster as cofactor.

The protein resides in the cytoplasm. It carries out the reaction [[Fe-S] cluster scaffold protein carrying a second [4Fe-4S](2+) cluster] + N(6)-octanoyl-L-lysyl-[protein] + 2 oxidized [2Fe-2S]-[ferredoxin] + 2 S-adenosyl-L-methionine + 4 H(+) = [[Fe-S] cluster scaffold protein] + N(6)-[(R)-dihydrolipoyl]-L-lysyl-[protein] + 4 Fe(3+) + 2 hydrogen sulfide + 2 5'-deoxyadenosine + 2 L-methionine + 2 reduced [2Fe-2S]-[ferredoxin]. Its pathway is protein modification; protein lipoylation via endogenous pathway; protein N(6)-(lipoyl)lysine from octanoyl-[acyl-carrier-protein]: step 2/2. In terms of biological role, catalyzes the radical-mediated insertion of two sulfur atoms into the C-6 and C-8 positions of the octanoyl moiety bound to the lipoyl domains of lipoate-dependent enzymes, thereby converting the octanoylated domains into lipoylated derivatives. The protein is Lipoyl synthase of Rhodospirillum centenum (strain ATCC 51521 / SW).